Reading from the N-terminus, the 509-residue chain is AAA ATPase forming ring-shaped complexes (509 aa).

Positions 11–50 form a coiled coil; that stretch reads AHLQRTISNLSARNAKLAELLKASRDKLSILQDQLEDLAA. 236–241 contacts ATP; sequence GCGKTL.

It belongs to the AAA ATPase family. In terms of assembly, homohexamer. Assembles into a hexameric ring structure.

The protein is AAA ATPase forming ring-shaped complexes of Corynebacterium diphtheriae (strain ATCC 700971 / NCTC 13129 / Biotype gravis).